A 234-amino-acid chain; its full sequence is Thioredoxin-dependent peroxide reductase, mitochondrial (234 aa).

The N-terminal 30 residues, 1-30 (MSFVARSLIRNVPLMGKAILSQQKQIAARL), are a transit peptide targeting the mitochondrion. The Thioredoxin domain occupies 40-198 (VRVQQPAPDF…VLRLIKAFQF (159 aa)). Catalysis depends on C85, which acts as the Cysteine sulfenic acid (-SOH) intermediate.

This sequence belongs to the peroxiredoxin family. AhpC/Prx1 subfamily. Homodimer; disulfide-linked, upon oxidation. 6 homodimers assemble to form a ring-like dodecamer. Also exists as a monomer, however the monomeric form is present at a much lower level than the homodimeric form. As to expression, expressed in thoracic flight muscles (at protein level). Detected in the head and body (at protein level).

It is found in the mitochondrion. It carries out the reaction a hydroperoxide + [thioredoxin]-dithiol = an alcohol + [thioredoxin]-disulfide + H2O. Its function is as follows. Thiol-specific peroxidase that catalyzes the reduction of hydrogen peroxide and organic hydroperoxides to water and alcohols, respectively. Plays a role in cell protection against oxidative stress by detoxifying peroxides. May be involved in aging-associated changes in the responsiveness to oxidative stress. Involved in the maintenance of global thiol redox homeostasis. Functions in the central nervous system (CNS) and in motor neurons and is essential for normal motor function. The sequence is that of Thioredoxin-dependent peroxide reductase, mitochondrial from Drosophila melanogaster (Fruit fly).